Consider the following 67-residue polypeptide: uncharacterized protein (67 aa).

The next 2 helical transmembrane spans lie at 13 to 32 and 42 to 64; these read IACL…GFIV and RLTN…TLGL.

The protein resides in the membrane. This is an uncharacterized protein from Saccharomyces cerevisiae (strain ATCC 204508 / S288c) (Baker's yeast).